The sequence spans 410 residues: MDFMAQDPEVFGAIHNEEERQEHNIELIASENIVSPAVRAAQGSVLTNKYSEGYPGHRYYGGNQYIDVVENLAIDRAKKLFGAEFANVQPHSGSQANMATYRAFLEDGDKVLAMDLTDGGHLTHGSPVSFSGQEYHFYHYGLDPKTERLNYAKIREQAEQVQPRMIVAGASAYSREIDFKKFREIADHVGAFLMVDMAHIAGLVAAGLHMNPVPYADVVTTTTHKTLRGPRGGLILAKAQYGKAINSALFPGIQGGPLDHVVAAKAVALGEALQPSFKTYAQHILDNMQAMVSGFEEDPHLRLISGGSDNHMVLIDVTGYGVNGRQVQDLLDEVGITTNKNQIPGEQNGPFKTSGIRVGTAAITTRGFTADESKRVGELISAAIAQRDDQPALDQIHQEVLALTARHPLS.

(6S)-5,6,7,8-tetrahydrofolate contacts are provided by residues leucine 116 and 120 to 122 (GHL). Lysine 225 carries the N6-(pyridoxal phosphate)lysine modification.

It belongs to the SHMT family. Homodimer. It depends on pyridoxal 5'-phosphate as a cofactor.

It is found in the cytoplasm. The enzyme catalyses (6R)-5,10-methylene-5,6,7,8-tetrahydrofolate + glycine + H2O = (6S)-5,6,7,8-tetrahydrofolate + L-serine. The protein operates within one-carbon metabolism; tetrahydrofolate interconversion. Its pathway is amino-acid biosynthesis; glycine biosynthesis; glycine from L-serine: step 1/1. Functionally, catalyzes the reversible interconversion of serine and glycine with tetrahydrofolate (THF) serving as the one-carbon carrier. This reaction serves as the major source of one-carbon groups required for the biosynthesis of purines, thymidylate, methionine, and other important biomolecules. Also exhibits THF-independent aldolase activity toward beta-hydroxyamino acids, producing glycine and aldehydes, via a retro-aldol mechanism. The chain is Serine hydroxymethyltransferase from Lacticaseibacillus casei (strain BL23) (Lactobacillus casei).